Reading from the N-terminus, the 54-residue chain is Califin-B (54 aa).

C25 and C53 are oxidised to a cystine. A Leucine amide modification is found at L36.

The protein belongs to the molluscan ELH family. This protein consists of a large 36-residue subunit, bound by a single disulfide-bond to a small 18-residue subunit.

Its subcellular location is the secreted. Functionally, injected in sexually mature animals califin B excites LB and LC cells of the abdominal ganglion and cause egg-laying. This is Califin-B from Aplysia californica (California sea hare).